The sequence spans 371 residues: 3-dehydroquinate synthase (371 aa).

Residues 72 to 77 (DGEEHK), 106 to 110 (GVVGD), 130 to 131 (TT), K143, K152, and 170 to 173 (TLKT) each bind NAD(+). The Zn(2+) site is built by E185, H248, and H265.

The protein belongs to the sugar phosphate cyclases superfamily. Dehydroquinate synthase family. The cofactor is Co(2+). Requires Zn(2+) as cofactor. It depends on NAD(+) as a cofactor.

The protein resides in the cytoplasm. The enzyme catalyses 7-phospho-2-dehydro-3-deoxy-D-arabino-heptonate = 3-dehydroquinate + phosphate. It functions in the pathway metabolic intermediate biosynthesis; chorismate biosynthesis; chorismate from D-erythrose 4-phosphate and phosphoenolpyruvate: step 2/7. Its function is as follows. Catalyzes the conversion of 3-deoxy-D-arabino-heptulosonate 7-phosphate (DAHP) to dehydroquinate (DHQ). This is 3-dehydroquinate synthase from Pelotomaculum thermopropionicum (strain DSM 13744 / JCM 10971 / SI).